Consider the following 99-residue polypeptide: HTH-type transcriptional regulator YgaV (99 aa).

Residues 7-99 (LQASAEQAAA…IATLKNVYCP (93 aa)) form the HTH arsR-type domain. The H-T-H motif DNA-binding region spans 41-64 (AGELTRITGLSASATSQHLARMRD).

Its activity is regulated as follows. In the presence of H(2)S, two cysteine residues form an intramolecular tetrasulfide bond, which attenuates the binding of YgaV to DNA. Both unmodified YgaV and sulfide-modified YgaV can probably function as either a repressor or an activator. Binds heme, which may influence the DNA-binding affinity. Functionally, transcriptional regulator that regulates large-scale gene expression in response to sulfide. May act as a global regulator responsible for redox homeostasis. It functions as both a repressor and an activator. In the absence of sulfide compounds, it negatively regulates many anaerobic respiratory genes, including formate, fumarate, lactate, nitrate and nitrite reductase genes. In the presence of hydrogen sulfide (H(2)S), YgaV activity is attenuated, leading to the expression of anaerobic respiratory and ROS scavenging genes, which contributes to redox homeostasis, reactive oxygen species (ROS) scavenging and antibiotic tolerance. It responds to H(2)O(2) scavenging and increases antibiotic tolerance under H(2)S-atmospheric conditions. It also negatively regulates its own expression by binding to the ygaVP promoter region. May also be involved in regulatory mechanisms that operate independently of sulfide. This chain is HTH-type transcriptional regulator YgaV (ygaV), found in Escherichia coli (strain K12).